We begin with the raw amino-acid sequence, 250 residues long: MSNDPTHQFLVNKIVPLEIGGIDFSFTNASLFMVATVGAAAGFLYLTTSQRGLIPTRMQSVSEMSYEFIASMLREGAGSHGMKFFPMVFSLFMFILTANLLGMVPYFFTVTSQIIVTFALAVFVIGTVLLYGFYKHGFGFLKLFVPQGVPGALLPLVVAIEIISFLSRPISLSVRLFANMLAGHITLKVFAGFVASLSAFGALGIGGAILPLIMTVALTGLEFLVAFLQAYVFAVLTCMYLNDAVHPGGH.

6 consecutive transmembrane segments (helical) span residues 26-46, 84-104, 114-134, 143-163, 193-213, and 216-236; these read FTNA…FLYL, FFPM…LGMV, IIVT…YGFY, LFVP…IEII, FVAS…LPLI, and VALT…FAVL.

The protein belongs to the ATPase A chain family. In terms of assembly, F-type ATPases have 2 components, CF(1) - the catalytic core - and CF(0) - the membrane proton channel. CF(1) has five subunits: alpha(3), beta(3), gamma(1), delta(1), epsilon(1). CF(0) has three main subunits: a(1), b(2) and c(9-12). The alpha and beta chains form an alternating ring which encloses part of the gamma chain. CF(1) is attached to CF(0) by a central stalk formed by the gamma and epsilon chains, while a peripheral stalk is formed by the delta and b chains.

Its subcellular location is the cell inner membrane. Key component of the proton channel; it plays a direct role in the translocation of protons across the membrane. The polypeptide is ATP synthase subunit a (Rhizobium meliloti (strain 1021) (Ensifer meliloti)).